A 348-amino-acid chain; its full sequence is Nicotinate-nucleotide--dimethylbenzimidazole phosphoribosyltransferase (348 aa).

Glu316 acts as the Proton acceptor in catalysis.

This sequence belongs to the CobT family.

The catalysed reaction is 5,6-dimethylbenzimidazole + nicotinate beta-D-ribonucleotide = alpha-ribazole 5'-phosphate + nicotinate + H(+). It participates in nucleoside biosynthesis; alpha-ribazole biosynthesis; alpha-ribazole from 5,6-dimethylbenzimidazole: step 1/2. Catalyzes the synthesis of alpha-ribazole-5'-phosphate from nicotinate mononucleotide (NAMN) and 5,6-dimethylbenzimidazole (DMB). The chain is Nicotinate-nucleotide--dimethylbenzimidazole phosphoribosyltransferase from Xanthomonas euvesicatoria pv. vesicatoria (strain 85-10) (Xanthomonas campestris pv. vesicatoria).